A 149-amino-acid chain; its full sequence is Macrodomain Ter protein (149 aa).

Belongs to the MatP family. Homodimer.

The protein localises to the cytoplasm. Functionally, required for spatial organization of the terminus region of the chromosome (Ter macrodomain) during the cell cycle. Prevents early segregation of duplicated Ter macrodomains during cell division. Binds specifically to matS, which is a 13 bp signature motif repeated within the Ter macrodomain. This is Macrodomain Ter protein from Vibrio campbellii (strain ATCC BAA-1116).